Consider the following 154-residue polypeptide: Ribosome maturation factor RimP (154 aa).

The protein belongs to the RimP family.

The protein resides in the cytoplasm. Its function is as follows. Required for maturation of 30S ribosomal subunits. The protein is Ribosome maturation factor RimP of Desulforudis audaxviator (strain MP104C).